The following is a 61-amino-acid chain: MAKDFVTGRKTTFGKKRSHALNQTNRSWKPNLQKVRILVDGKPKKVWVSTRALKSGKVTRV.

The interval 1–26 (MAKDFVTGRKTTFGKKRSHALNQTNR) is disordered.

This sequence belongs to the bacterial ribosomal protein bL28 family.

This chain is Large ribosomal subunit protein bL28, found in Ligilactobacillus salivarius (strain UCC118) (Lactobacillus salivarius).